The primary structure comprises 859 residues: Envelope glycoprotein (859 aa).

Positions 1–6 (MVSIAF) are excised as a propeptide. Topologically, residues 7 to 614 (YGGIPGGIST…KDLWSHIGNW (608 aa)) are extracellular. Asn-40 carries N-linked (GlcNAc...) asparagine; by host glycosylation. Residues 47 to 66 (AESKEARDQEMNLKEESKEE) are disordered. Basic and acidic residues predominate over residues 48-66 (ESKEARDQEMNLKEESKEE). Asn-112, Asn-141, Asn-148, Asn-186, Asn-214, Asn-233, Asn-244, Asn-340, Asn-368, Asn-399, Asn-406, and Asn-411 each carry an N-linked (GlcNAc...) asparagine; by host glycan. Residues 446–466 (FGISAIVAAIVAATAIAASAT) form a fusion peptide region. Asn-483 and Asn-490 each carry an N-linked (GlcNAc...) asparagine; by host glycan. Positions 498–513 (LIERQIKILYAMILQT) are immunosuppression. N-linked (GlcNAc...) asparagine; by host glycosylation is found at Asn-550 and Asn-557. Coiled coils occupy residues 576–624 (ILTT…SIIK) and 663–699 (KKFH…YYKQ). The helical transmembrane segment at 615-635 (IPGLGASIIKYIVMFLLIYLL) threads the bilayer. The Cytoplasmic portion of the chain corresponds to 636 to 859 (LTSSPKILRA…TSHVSMPQYV (224 aa)).

As to quaternary structure, the mature envelope protein (Env) consists of a trimer of SU-TM heterodimers attached by noncovalent interactions or by a labile interchain disulfide bond. Post-translationally, specific enzymatic cleavages in vivo yield mature proteins. Envelope glycoproteins are synthesized as an inactive precursor that is N-glycosylated and processed likely by host cell furin or by a furin-like protease in the Golgi to yield the mature SU and TM proteins. The cleavage site between SU and TM requires the minimal sequence [KR]-X-[KR]-R.

It localises to the virion membrane. The protein localises to the host cell membrane. Functionally, the surface protein (SU) attaches the virus to the host cell by binding to its receptor. This interaction triggers the refolding of the transmembrane protein (TM) and is thought to activate its fusogenic potential by unmasking its fusion peptide. Fusion occurs at the host cell plasma membrane. The transmembrane protein (TM) acts as a class I viral fusion protein. Under the current model, the protein has at least 3 conformational states: pre-fusion native state, pre-hairpin intermediate state, and post-fusion hairpin state. During viral and target cell membrane fusion, the coiled coil regions (heptad repeats) assume a trimer-of-hairpins structure, positioning the fusion peptide in close proximity to the C-terminal region of the ectodomain. The formation of this structure appears to drive apposition and subsequent fusion of viral and target cell membranes. Membranes fusion leads to delivery of the nucleocapsid into the cytoplasm. The protein is Envelope glycoprotein (env) of Equus asinus (Donkey).